Here is a 355-residue protein sequence, read N- to C-terminus: Uroporphyrinogen decarboxylase (355 aa).

Substrate-binding positions include 38–42 (RQAGR), Asp87, Tyr162, Ser217, and His331.

This sequence belongs to the uroporphyrinogen decarboxylase family. In terms of assembly, homodimer.

The protein resides in the cytoplasm. It catalyses the reaction uroporphyrinogen III + 4 H(+) = coproporphyrinogen III + 4 CO2. Its pathway is porphyrin-containing compound metabolism; protoporphyrin-IX biosynthesis; coproporphyrinogen-III from 5-aminolevulinate: step 4/4. Its function is as follows. Catalyzes the decarboxylation of four acetate groups of uroporphyrinogen-III to yield coproporphyrinogen-III. The polypeptide is Uroporphyrinogen decarboxylase (Streptomyces avermitilis (strain ATCC 31267 / DSM 46492 / JCM 5070 / NBRC 14893 / NCIMB 12804 / NRRL 8165 / MA-4680)).